Here is a 181-residue protein sequence, read N- to C-terminus: Oligoribonuclease (181 aa).

One can recognise an Exonuclease domain in the interval 8–171 (LIWLDMEMTG…ADILESIEEM (164 aa)). Tyr-129 is a catalytic residue.

This sequence belongs to the oligoribonuclease family.

It is found in the cytoplasm. Functionally, 3'-to-5' exoribonuclease specific for small oligoribonucleotides. The protein is Oligoribonuclease of Chromobacterium violaceum (strain ATCC 12472 / DSM 30191 / JCM 1249 / CCUG 213 / NBRC 12614 / NCIMB 9131 / NCTC 9757 / MK).